Here is a 498-residue protein sequence, read N- to C-terminus: Glutamate--tRNA ligase (498 aa).

The 'HIGH' region motif lies at 11–21 (PSPTGHLHIGN). Residues 260–264 (KLSKR) carry the 'KMSKS' region motif. Position 263 (Lys-263) interacts with ATP.

Belongs to the class-I aminoacyl-tRNA synthetase family. Glutamate--tRNA ligase type 1 subfamily. As to quaternary structure, monomer.

Its subcellular location is the cytoplasm. The enzyme catalyses tRNA(Glu) + L-glutamate + ATP = L-glutamyl-tRNA(Glu) + AMP + diphosphate. Its function is as follows. Catalyzes the attachment of glutamate to tRNA(Glu) in a two-step reaction: glutamate is first activated by ATP to form Glu-AMP and then transferred to the acceptor end of tRNA(Glu). The chain is Glutamate--tRNA ligase from Leuconostoc mesenteroides subsp. mesenteroides (strain ATCC 8293 / DSM 20343 / BCRC 11652 / CCM 1803 / JCM 6124 / NCDO 523 / NBRC 100496 / NCIMB 8023 / NCTC 12954 / NRRL B-1118 / 37Y).